Consider the following 231-residue polypeptide: Probable pyridoxamine 5'-phosphate oxidase (231 aa).

20–23 (QYEK) provides a ligand contact to pyridoxal 5'-phosphate. 74-77 (RLVL) is a binding site for FMN. Residue lysine 79 coordinates pyridoxal 5'-phosphate. FMN is bound by residues 89-90 (FT), 96-97 (KK), and glutamine 119. Residues tyrosine 137, arginine 141, and serine 145 each coordinate pyridoxal 5'-phosphate. FMN is bound by residues 154–155 (QS) and tryptophan 202. Residue 208–210 (RLH) participates in pyridoxal 5'-phosphate binding. Position 212 (arginine 212) interacts with FMN.

This sequence belongs to the pyridoxamine 5'-phosphate oxidase family. Homodimer. The cofactor is FMN.

The catalysed reaction is pyridoxamine 5'-phosphate + O2 + H2O = pyridoxal 5'-phosphate + H2O2 + NH4(+). It catalyses the reaction pyridoxine 5'-phosphate + O2 = pyridoxal 5'-phosphate + H2O2. Its pathway is cofactor metabolism; pyridoxal 5'-phosphate salvage; pyridoxal 5'-phosphate from pyridoxamine 5'-phosphate: step 1/1. It participates in cofactor metabolism; pyridoxal 5'-phosphate salvage; pyridoxal 5'-phosphate from pyridoxine 5'-phosphate: step 1/1. Its function is as follows. Catalyzes the oxidation of either pyridoxine 5'-phosphate (PNP) or pyridoxamine 5'-phosphate (PMP) into pyridoxal 5'-phosphate (PLP). The sequence is that of Probable pyridoxamine 5'-phosphate oxidase from Schizosaccharomyces pombe (strain 972 / ATCC 24843) (Fission yeast).